An 86-amino-acid chain; its full sequence is Small ribosomal subunit protein bS16 (86 aa).

This sequence belongs to the bacterial ribosomal protein bS16 family.

The chain is Small ribosomal subunit protein bS16 from Bordetella petrii (strain ATCC BAA-461 / DSM 12804 / CCUG 43448).